Reading from the N-terminus, the 128-residue chain is Prokineticin-2 (128 aa).

Residues 1 to 26 (MGDPRCAPLLLLLLLPLLFTPPAGDA) form the signal peptide. 5 disulfides stabilise this stretch: Cys-33-Cys-45, Cys-39-Cys-57, Cys-44-Cys-106, Cys-67-Cys-114, and Cys-108-Cys-124.

Belongs to the AVIT (prokineticin) family. In terms of tissue distribution, expressed in the SCN and among a few other discrete brain areas, including the islands of Calleja, media l preoptic area of the hypothalamus and the shell of the nucleus accumbens. Highly expressed in testis. In the SCN, expression subjected to high amplitude of circadian oscillation.

The protein localises to the secreted. Functionally, may function as an output molecule from the suprachiasmatic nucleus (SCN) that transmits behavioral circadian rhythm. May also function locally within the SCN to synchronize output. Potently contracts gastrointestinal (GI) smooth muscle. The polypeptide is Prokineticin-2 (Prok2) (Mus musculus (Mouse)).